We begin with the raw amino-acid sequence, 95 residues long: Aspartyl/glutamyl-tRNA(Asn/Gln) amidotransferase subunit C (95 aa).

It belongs to the GatC family. In terms of assembly, heterotrimer of A, B and C subunits.

It catalyses the reaction L-glutamyl-tRNA(Gln) + L-glutamine + ATP + H2O = L-glutaminyl-tRNA(Gln) + L-glutamate + ADP + phosphate + H(+). The catalysed reaction is L-aspartyl-tRNA(Asn) + L-glutamine + ATP + H2O = L-asparaginyl-tRNA(Asn) + L-glutamate + ADP + phosphate + 2 H(+). Functionally, allows the formation of correctly charged Asn-tRNA(Asn) or Gln-tRNA(Gln) through the transamidation of misacylated Asp-tRNA(Asn) or Glu-tRNA(Gln) in organisms which lack either or both of asparaginyl-tRNA or glutaminyl-tRNA synthetases. The reaction takes place in the presence of glutamine and ATP through an activated phospho-Asp-tRNA(Asn) or phospho-Glu-tRNA(Gln). The protein is Aspartyl/glutamyl-tRNA(Asn/Gln) amidotransferase subunit C of Ectopseudomonas mendocina (strain ymp) (Pseudomonas mendocina).